The primary structure comprises 302 residues: uncharacterized protein (302 aa).

In terms of biological role, may be a membrane-bound protein, possibly involved in IAA or IAA-Lysine transport. This is an uncharacterized protein from Pseudomonas savastanoi (Pseudomonas syringae pv. savastanoi).